Consider the following 169-residue polypeptide: Ureidoglycolate lyase (169 aa).

Belongs to the ureidoglycolate lyase family. As to quaternary structure, homodimer. Ni(2+) serves as cofactor.

It carries out the reaction (S)-ureidoglycolate = urea + glyoxylate. The protein operates within nitrogen metabolism; (S)-allantoin degradation. Catalyzes the catabolism of the allantoin degradation intermediate (S)-ureidoglycolate, generating urea and glyoxylate. Involved in the utilization of allantoin as nitrogen source. This Pseudomonas paraeruginosa (strain DSM 24068 / PA7) (Pseudomonas aeruginosa (strain PA7)) protein is Ureidoglycolate lyase.